A 181-amino-acid chain; its full sequence is ATP-dependent protease subunit HslV (181 aa).

Residue T7 is part of the active site. 3 residues coordinate Na(+): A165, C168, and T171.

Belongs to the peptidase T1B family. HslV subfamily. In terms of assembly, a double ring-shaped homohexamer of HslV is capped on each side by a ring-shaped HslU homohexamer. The assembly of the HslU/HslV complex is dependent on binding of ATP.

Its subcellular location is the cytoplasm. It catalyses the reaction ATP-dependent cleavage of peptide bonds with broad specificity.. With respect to regulation, allosterically activated by HslU binding. In terms of biological role, protease subunit of a proteasome-like degradation complex believed to be a general protein degrading machinery. The polypeptide is ATP-dependent protease subunit HslV (Lysinibacillus sphaericus (strain C3-41)).